Here is a 181-residue protein sequence, read N- to C-terminus: ATP synthase subunit b 2 (181 aa).

Over residues 1-18 the composition is skewed to low complexity; it reads MATTTHDAGHGAAEAAHG. The disordered stretch occupies residues 1–20; that stretch reads MATTTHDAGHGAAEAAHGSS. A helical transmembrane segment spans residues 34–54; that stretch reads IFWLLVTLVVIYLILSRIALP.

This sequence belongs to the ATPase B chain family. F-type ATPases have 2 components, F(1) - the catalytic core - and F(0) - the membrane proton channel. F(1) has five subunits: alpha(3), beta(3), gamma(1), delta(1), epsilon(1). F(0) has three main subunits: a(1), b(2) and c(10-14). The alpha and beta chains form an alternating ring which encloses part of the gamma chain. F(1) is attached to F(0) by a central stalk formed by the gamma and epsilon chains, while a peripheral stalk is formed by the delta and b chains.

The protein resides in the cell inner membrane. Functionally, f(1)F(0) ATP synthase produces ATP from ADP in the presence of a proton or sodium gradient. F-type ATPases consist of two structural domains, F(1) containing the extramembraneous catalytic core and F(0) containing the membrane proton channel, linked together by a central stalk and a peripheral stalk. During catalysis, ATP synthesis in the catalytic domain of F(1) is coupled via a rotary mechanism of the central stalk subunits to proton translocation. In terms of biological role, component of the F(0) channel, it forms part of the peripheral stalk, linking F(1) to F(0). The b'-subunit is a diverged and duplicated form of b found in plants and photosynthetic bacteria. In Ruegeria sp. (strain TM1040) (Silicibacter sp.), this protein is ATP synthase subunit b 2 (atpF2).